A 203-amino-acid chain; its full sequence is Large ribosomal subunit protein bL25 (203 aa).

It belongs to the bacterial ribosomal protein bL25 family. CTC subfamily. As to quaternary structure, part of the 50S ribosomal subunit; part of the 5S rRNA/L5/L18/L25 subcomplex. Contacts the 5S rRNA. Binds to the 5S rRNA independently of L5 and L18.

Functionally, this is one of the proteins that binds to the 5S RNA in the ribosome where it forms part of the central protuberance. The protein is Large ribosomal subunit protein bL25 of Rickettsia typhi (strain ATCC VR-144 / Wilmington).